A 338-amino-acid polypeptide reads, in one-letter code: Ketol-acid reductoisomerase (NADP(+)) (338 aa).

The KARI N-terminal Rossmann domain occupies 1–181; the sequence is MKVFYDKDCD…GGGKGGIIET (181 aa). Residues 24–27, Arg-47, and Ser-52 each bind NADP(+); that span reads YGSQ. The active site involves His-107. An NADP(+)-binding site is contributed by Gly-133. Positions 182-327 constitute a KARI C-terminal knotted domain; it reads NFKEETETDL…GQLRAMMPWI (146 aa). The Mg(2+) site is built by Asp-190, Glu-194, Glu-226, and Glu-230. Ser-251 serves as a coordination point for substrate.

Belongs to the ketol-acid reductoisomerase family. The cofactor is Mg(2+).

It carries out the reaction (2R)-2,3-dihydroxy-3-methylbutanoate + NADP(+) = (2S)-2-acetolactate + NADPH + H(+). It catalyses the reaction (2R,3R)-2,3-dihydroxy-3-methylpentanoate + NADP(+) = (S)-2-ethyl-2-hydroxy-3-oxobutanoate + NADPH + H(+). Its pathway is amino-acid biosynthesis; L-isoleucine biosynthesis; L-isoleucine from 2-oxobutanoate: step 2/4. It participates in amino-acid biosynthesis; L-valine biosynthesis; L-valine from pyruvate: step 2/4. Functionally, involved in the biosynthesis of branched-chain amino acids (BCAA). Catalyzes an alkyl-migration followed by a ketol-acid reduction of (S)-2-acetolactate (S2AL) to yield (R)-2,3-dihydroxy-isovalerate. In the isomerase reaction, S2AL is rearranged via a Mg-dependent methyl migration to produce 3-hydroxy-3-methyl-2-ketobutyrate (HMKB). In the reductase reaction, this 2-ketoacid undergoes a metal-dependent reduction by NADPH to yield (R)-2,3-dihydroxy-isovalerate. This Delftia acidovorans (strain DSM 14801 / SPH-1) protein is Ketol-acid reductoisomerase (NADP(+)).